The primary structure comprises 55 residues: LTYYTPEYETKGLLLHXHRMSGGDHIHAGXVVGKEITLGFVDLLRVALEACVQAR.

Residue histidine 18 is the Proton acceptor of the active site. 2 residues coordinate substrate: arginine 19 and histidine 27.

It belongs to the RuBisCO large chain family. Type I subfamily. In terms of assembly, heterohexadecamer of 8 large chains and 8 small chains; disulfide-linked. The disulfide link is formed within the large subunit homodimers. Mg(2+) is required as a cofactor. The disulfide bond which can form in the large chain dimeric partners within the hexadecamer appears to be associated with oxidative stress and protein turnover.

The protein resides in the plastid. Its subcellular location is the chloroplast. The enzyme catalyses 2 (2R)-3-phosphoglycerate + 2 H(+) = D-ribulose 1,5-bisphosphate + CO2 + H2O. The catalysed reaction is D-ribulose 1,5-bisphosphate + O2 = 2-phosphoglycolate + (2R)-3-phosphoglycerate + 2 H(+). RuBisCO catalyzes two reactions: the carboxylation of D-ribulose 1,5-bisphosphate, the primary event in carbon dioxide fixation, as well as the oxidative fragmentation of the pentose substrate in the photorespiration process. Both reactions occur simultaneously and in competition at the same active site. The polypeptide is Ribulose bisphosphate carboxylase large chain (Vitis sp. (Grape)).